The following is a 184-amino-acid chain: NADH-quinone oxidoreductase subunit B (184 aa).

Cysteine 63, cysteine 64, cysteine 128, and cysteine 158 together coordinate [4Fe-4S] cluster.

It belongs to the complex I 20 kDa subunit family. NDH-1 is composed of 14 different subunits. Subunits NuoB, C, D, E, F, and G constitute the peripheral sector of the complex. [4Fe-4S] cluster is required as a cofactor.

It is found in the cell inner membrane. The catalysed reaction is a quinone + NADH + 5 H(+)(in) = a quinol + NAD(+) + 4 H(+)(out). Its function is as follows. NDH-1 shuttles electrons from NADH, via FMN and iron-sulfur (Fe-S) centers, to quinones in the respiratory chain. The immediate electron acceptor for the enzyme in this species is believed to be ubiquinone. Couples the redox reaction to proton translocation (for every two electrons transferred, four hydrogen ions are translocated across the cytoplasmic membrane), and thus conserves the redox energy in a proton gradient. This chain is NADH-quinone oxidoreductase subunit B, found in Xanthomonas axonopodis pv. citri (strain 306).